The chain runs to 382 residues: Mannitol-1-phosphate 5-dehydrogenase (382 aa).

NAD(+) is bound at residue 3-14 (ALHFGAGNIGRG). Position 269 is an N6-acetyllysine (Lys-269).

The protein belongs to the mannitol dehydrogenase family.

The catalysed reaction is D-mannitol 1-phosphate + NAD(+) = beta-D-fructose 6-phosphate + NADH + H(+). The protein is Mannitol-1-phosphate 5-dehydrogenase of Escherichia coli O9:H4 (strain HS).